Here is a 212-residue protein sequence, read N- to C-terminus: MTSQRTRERLIQRLCEEGVSNPKVLDAIRRTPRHLFVDEALAHRAYEDTALPIGHNQTISQPFMVAHMSELLLEAGPLDKVLEIGTGSGYQTAILAQLVERVFSVERIKVLQDRAKERLVELNLRNVVFRWGDGCDGWQALAPYNGIIVTAVAPEVPQALLDQLAPGGRMVIPVGPAGEVQQLMLIVREEQGFSRRVLGAVRFVPLLNGPVA.

Serine 60 is an active-site residue.

It belongs to the methyltransferase superfamily. L-isoaspartyl/D-aspartyl protein methyltransferase family.

Its subcellular location is the cytoplasm. The enzyme catalyses [protein]-L-isoaspartate + S-adenosyl-L-methionine = [protein]-L-isoaspartate alpha-methyl ester + S-adenosyl-L-homocysteine. Catalyzes the methyl esterification of L-isoaspartyl residues in peptides and proteins that result from spontaneous decomposition of normal L-aspartyl and L-asparaginyl residues. It plays a role in the repair and/or degradation of damaged proteins. This chain is Protein-L-isoaspartate O-methyltransferase, found in Pseudomonas putida (strain W619).